The chain runs to 76 residues: Heat shock factor-binding protein 1 (76 aa).

The protein belongs to the HSBP1 family. In terms of assembly, homohexamer. Associates with heptad repeats of HSF1 trimers and probably also HSF1 monomers, and with HSP70. Association with HSF1 trimers and HSP70 coincides with attenuation of heat shock response and the conversion of HSF1 trimer to monomer.

The protein resides in the nucleus. In terms of biological role, negative regulator of the heat shock response. Negatively affects HSF1 DNA-binding activity. May have a role in the suppression of the activation of the stress response during the aging process. This Pongo abelii (Sumatran orangutan) protein is Heat shock factor-binding protein 1 (HSBP1).